Consider the following 189-residue polypeptide: Orotate phosphoribosyltransferase (189 aa).

5-phospho-alpha-D-ribose 1-diphosphate-binding positions include Arg94, Lys95, Lys98, and 120 to 128 (EDVTTTGGS). The orotate site is built by Thr124 and Arg152.

This sequence belongs to the purine/pyrimidine phosphoribosyltransferase family. PyrE subfamily. Homodimer. Mg(2+) serves as cofactor.

The catalysed reaction is orotidine 5'-phosphate + diphosphate = orotate + 5-phospho-alpha-D-ribose 1-diphosphate. It functions in the pathway pyrimidine metabolism; UMP biosynthesis via de novo pathway; UMP from orotate: step 1/2. Functionally, catalyzes the transfer of a ribosyl phosphate group from 5-phosphoribose 1-diphosphate to orotate, leading to the formation of orotidine monophosphate (OMP). The polypeptide is Orotate phosphoribosyltransferase (Thermococcus gammatolerans (strain DSM 15229 / JCM 11827 / EJ3)).